A 557-amino-acid polypeptide reads, in one-letter code: Polypyrimidine tract-binding protein 1 (557 aa).

Met1 bears the N-acetylmethionine mark. Ser16 is subject to Phosphoserine. RRM domains lie at 59–143, 184–260, and 363–437; these read RVIH…SSPN, LRII…FSKL, and SVLL…LSKH. Lys65 participates in a covalent cross-link: Glycyl lysine isopeptide (Lys-Gly) (interchain with G-Cter in SUMO2). Tyr127 carries the post-translational modification Phosphotyrosine. Thr138 carries the post-translational modification Phosphothreonine. Phosphoserine is present on Ser141. A Glycyl lysine isopeptide (Lys-Gly) (interchain with G-Cter in SUMO2) cross-link involves residue Lys218. The tract at residues 437–460 is disordered; it reads HQSVQLPREGQEDQGLTKDYGNSP. At Ser459 the chain carries Phosphoserine. In terms of domain architecture, RRM 4 spans 480 to 555; the sequence is ATLHLSNIPP…HHLRVSFSKS (76 aa).

As to quaternary structure, monomer. Part of a ternary complex containing KHSRP, PTBP1, PTBP2 and HNRPH1. Interacts with RAVER1 and SFPQ.

The protein resides in the nucleus. Functionally, plays a role in pre-mRNA splicing and in the regulation of alternative splicing events. Activates exon skipping of its own pre-mRNA during muscle cell differentiation. Binds to the polypyrimidine tract of introns. May promote RNA looping when bound to two separate polypyrimidine tracts in the same pre-mRNA. May promote the binding of U2 snRNP to pre-mRNA. Cooperates with RAVER1 to modulate switching between mutually exclusive exons during maturation of the TPM1 pre-mRNA. Represses the splicing of MAPT/Tau exon 10. Binds to polypyrimidine-rich controlling element (PCE) of CFTR and promotes exon skipping of CFTR exon 9, thereby antagonizing TIA1 and its role in exon inclusion of CFTR exon 9. Plays a role in the splicing of pyruvate kinase PKM by binding repressively to a polypyrimidine tract flanking PKM exon 9, inhibiting exon 9 inclusion and resulting in exon 10 inclusion and production of the PKM M2 isoform. This is Polypyrimidine tract-binding protein 1 (PTBP1) from Bos taurus (Bovine).